The primary structure comprises 208 residues: Interleukin-6 (208 aa).

An N-terminal signal peptide occupies residues 1–29 (MNSRFTSAFTPFAVSLGLLLVMTSAFPTP). Residue asparagine 38 is glycosylated (N-linked (GlcNAc...) asparagine). A disulfide bridge links cysteine 72 with cysteine 78. Serine 81 carries the phosphoserine modification. A disulfide bridge links cysteine 101 with cysteine 111.

Belongs to the IL-6 superfamily. Component of a hexamer of two molecules each of IL6, IL6R and IL6ST; first binds to IL6R to associate with the signaling subunit IL6ST. Interacts with IL6R (via the N-terminal ectodomain); this interaction may be affected by IL6R-binding with SORL1, hence decreasing IL6 cis signaling. Interacts with SORL1 (via the N-terminal ectodomain); this interaction leads to IL6 internalization and lysosomal degradation. May form a trimeric complex with the soluble SORL1 ectodomain and soluble IL6R receptor; this interaction might stabilize circulating IL6, hence promoting IL6 trans signaling.

It is found in the secreted. Functionally, cytokine with a wide variety of biological functions in immunity, tissue regeneration, and metabolism. Binds to IL6R, then the complex associates to the signaling subunit IL6ST/gp130 to trigger the intracellular IL6-signaling pathway. The interaction with the membrane-bound IL6R and IL6ST stimulates 'classic signaling', whereas the binding of IL6 and soluble IL6R to IL6ST stimulates 'trans-signaling'. Alternatively, 'cluster signaling' occurs when membrane-bound IL6:IL6R complexes on transmitter cells activate IL6ST receptors on neighboring receiver cells. Its function is as follows. IL6 is a potent inducer of the acute phase response. Rapid production of IL6 contributes to host defense during infection and tissue injury, but excessive IL6 synthesis is involved in disease pathology. In the innate immune response, is synthesized by myeloid cells, such as macrophages and dendritic cells, upon recognition of pathogens through toll-like receptors (TLRs) at the site of infection or tissue injury. In the adaptive immune response, is required for the differentiation of B cells into immunoglobulin-secreting cells. Plays a major role in the differentiation of CD4(+) T cell subsets. Essential factor for the development of T follicular helper (Tfh) cells that are required for the induction of germinal-center formation. Required to drive naive CD4(+) T cells to the Th17 lineage. Also required for proliferation of myeloma cells and the survival of plasmablast cells. Acts as an essential factor in bone homeostasis and on vessels directly or indirectly by induction of VEGF, resulting in increased angiogenesis activity and vascular permeability. Induces, through 'trans-signaling' and synergistically with IL1B and TNF, the production of VEGF. Involved in metabolic controls, is discharged into the bloodstream after muscle contraction increasing lipolysis and improving insulin resistance. 'Trans-signaling' in central nervous system also regulates energy and glucose homeostasis. Mediates, through GLP-1, crosstalk between insulin-sensitive tissues, intestinal L cells and pancreatic islets to adapt to changes in insulin demand. Also acts as a myokine. Plays a protective role during liver injury, being required for maintenance of tissue regeneration. Also has a pivotal role in iron metabolism by regulating HAMP/hepcidin expression upon inflammation or bacterial infection. Through activation of IL6ST-YAP-NOTCH pathway, induces inflammation-induced epithelial regeneration. This Bos taurus (Bovine) protein is Interleukin-6 (IL6).